A 251-amino-acid chain; its full sequence is Coproheme decarboxylase (251 aa).

Residues Arg133, 147 to 151 (YPMSK), His174, Gln187, and Ser225 contribute to the Fe-coproporphyrin III site. Tyr147 is a catalytic residue.

It belongs to the ChdC family. Type 1 subfamily. The cofactor is Fe-coproporphyrin III.

The enzyme catalyses Fe-coproporphyrin III + 2 H2O2 + 2 H(+) = heme b + 2 CO2 + 4 H2O. It catalyses the reaction Fe-coproporphyrin III + H2O2 + H(+) = harderoheme III + CO2 + 2 H2O. It carries out the reaction harderoheme III + H2O2 + H(+) = heme b + CO2 + 2 H2O. The protein operates within porphyrin-containing compound metabolism; protoheme biosynthesis. Functionally, involved in coproporphyrin-dependent heme b biosynthesis. Catalyzes the decarboxylation of Fe-coproporphyrin III (coproheme) to heme b (protoheme IX), the last step of the pathway. The reaction occurs in a stepwise manner with a three-propionate intermediate. The chain is Coproheme decarboxylase from Listeria welshimeri serovar 6b (strain ATCC 35897 / DSM 20650 / CCUG 15529 / CIP 8149 / NCTC 11857 / SLCC 5334 / V8).